We begin with the raw amino-acid sequence, 545 residues long: MDTSKDLICIGFEGTAEKTGVGIITSNGEVLFNKTIIYTPPVQGIHPREAADHHAETFVKLLKEALTVVPIEKIDLVSFSLGPGLGPSLRVTATTARALSLSINKPIIGVNHCISHVEIGKLKTDALDPLTLYVSGGNTQVLAYTGKKYRVIGETLDIAIGNCLDQFARHCNMPHPGGVYVEKYAKNGNKFIKLPYTVKGMDISLSGLLTAAMKKYDSKERIEDVCYSLQENSFSMLTEITERALAHTNKAEVMLVGGVAANNRLKEMLDIMCIEQNVDFYVPEREFCGDNGAMIAWLGILQYLNGKRMDLNDTKPISNYRSDMVEVNWISENEFNNENIKSRIIPEHLIGKGAEADISKGIYLEFESITKERVKKGYRILELDELIRLRRTVKEARFLASIKELGIYAPSIFDIDKENKKITMSYIHGKIAKEKIEEGNLNFCEDLGKIIGKMHSGGIVHNDLTTSNFIVSDNTFVIDFGLGKYSDLVEDKAIDLIVLKKSIMSIHYDKFDSVWNKIIEGYKTYEMFESVLECMKEVEKRARYL.

The segment at 1–329 is kae1; the sequence is MDTSKDLICI…YRSDMVEVNW (329 aa). Residues histidine 112, histidine 116, and tyrosine 133 each coordinate Fe cation. Residues 133-137, aspartate 165, glycine 178, glutamate 182, and asparagine 262 each bind L-threonylcarbamoyladenylate; that span reads YVSGG. Position 290 (aspartate 290) interacts with Fe cation. The 202-residue stretch at 344–545 folds into the Protein kinase domain; the sequence is IIPEHLIGKG…KEVEKRARYL (202 aa). ATP-binding positions include 350-358 and lysine 371; that span reads IGKGAEADI. Aspartate 463 serves as the catalytic Proton acceptor; for kinase activity.

The protein in the N-terminal section; belongs to the KAE1 / TsaD family. This sequence in the C-terminal section; belongs to the protein kinase superfamily. Tyr protein kinase family. BUD32 subfamily. As to quaternary structure, component of the KEOPS complex that consists of Kae1, Bud32, Cgi121 and Pcc1; the whole complex dimerizes. Fe(2+) serves as cofactor.

It is found in the cytoplasm. It carries out the reaction L-seryl-[protein] + ATP = O-phospho-L-seryl-[protein] + ADP + H(+). The enzyme catalyses L-threonyl-[protein] + ATP = O-phospho-L-threonyl-[protein] + ADP + H(+). The catalysed reaction is L-threonylcarbamoyladenylate + adenosine(37) in tRNA = N(6)-L-threonylcarbamoyladenosine(37) in tRNA + AMP + H(+). Required for the formation of a threonylcarbamoyl group on adenosine at position 37 (t(6)A37) in tRNAs that read codons beginning with adenine. Is a component of the KEOPS complex that is probably involved in the transfer of the threonylcarbamoyl moiety of threonylcarbamoyl-AMP (TC-AMP) to the N6 group of A37. The Kae1 domain likely plays a direct catalytic role in this reaction. The Bud32 domain probably displays kinase activity that regulates Kae1 function. The sequence is that of Probable bifunctional tRNA threonylcarbamoyladenosine biosynthesis protein from Methanococcus maripaludis (strain C5 / ATCC BAA-1333).